Reading from the N-terminus, the 81-residue chain is Small ribosomal subunit protein bS18 (81 aa).

The protein belongs to the bacterial ribosomal protein bS18 family. In terms of assembly, part of the 30S ribosomal subunit. Forms a tight heterodimer with protein bS6.

Binds as a heterodimer with protein bS6 to the central domain of the 16S rRNA, where it helps stabilize the platform of the 30S subunit. This chain is Small ribosomal subunit protein bS18, found in Chlamydia trachomatis serovar L2 (strain ATCC VR-902B / DSM 19102 / 434/Bu).